A 178-amino-acid chain; its full sequence is MPSNALWLRADQLSSVSPTVLDWLFDEGSLTRRLTALADGAFRVEPLLEGWQTLRDDECQGLDVPPGSSGWVREVYLHGHDRPWVFARSVAARSALEGSGFDLALLGTRSLGELLFSDSAFERGPIEVCRYPAAGLPAEVRAEGLWGRRSRFSRGALGVLVAEVFLPSLWDQAGIADV.

Residues Arg73, Leu111, and Glu163 each coordinate substrate.

It belongs to the UbiC family.

The protein localises to the cytoplasm. The enzyme catalyses chorismate = 4-hydroxybenzoate + pyruvate. Its pathway is cofactor biosynthesis; ubiquinone biosynthesis. In terms of biological role, removes the pyruvyl group from chorismate, with concomitant aromatization of the ring, to provide 4-hydroxybenzoate (4HB) for the ubiquinone pathway. This Pseudomonas aeruginosa (strain UCBPP-PA14) protein is Probable chorismate pyruvate-lyase.